Consider the following 309-residue polypeptide: Taste receptor type 2 member 31 (309 aa).

Residues 1-2 (MT) lie on the Extracellular side of the membrane. A helical membrane pass occupies residues 3 to 23 (TFLPIIFSSLVVVIFVIGNFA). Over 24–55 (NGFIALVNSIEWFKXQKISFADQILTALAVSR) the chain is Cytoplasmic. The chain crosses the membrane as a helical span at residues 56–76 (VGLLWVLLLNWYSTVLNPAFY). At 77 to 100 (SVEVRTTAYNVWAVTGHFSNWLAT) the chain is on the extracellular side. A helical membrane pass occupies residues 101-121 (SLSIFYLLKIANFSNFIFLHL). The Cytoplasmic segment spans residues 122–126 (KRRVK). A helical membrane pass occupies residues 127 to 147 (SVILVMLLGPLLFLACQLFMI). The Extracellular segment spans residues 148–181 (NMKEIVRTKEYEGNMTWKIKLRSAVYLSDATVTT). N161 carries an N-linked (GlcNAc...) asparagine glycan. The chain crosses the membrane as a helical span at residues 182–202 (LGNLVPFTLTLLCFLLLICSL). Residues 203–229 (CKHLKKMQLHGKGSQDPSTKVHIKVLQ) are Cytoplasmic-facing. Residues 230–250 (TVISFLLLCAIYFLSIMISVW) form a helical membrane-spanning segment. Residues 251–259 (SFGSLKNKP) lie on the Extracellular side of the membrane. The helical transmembrane segment at 260–280 (VFMFCKAIRFSYPSIHPFILI) threads the bilayer. Topologically, residues 281-309 (WGNKKLKQTFLSVLRQVRYWVKGEKPSSP) are cytoplasmic.

The protein belongs to the G-protein coupled receptor T2R family.

The protein resides in the membrane. Receptor that may play a role in the perception of bitterness and is gustducin-linked. May play a role in sensing the chemical composition of the gastrointestinal content. The activity of this receptor may stimulate alpha gustducin, mediate PLC-beta-2 activation and lead to the gating of TRPM5. The sequence is that of Taste receptor type 2 member 31 (TAS2R31) from Pan paniscus (Pygmy chimpanzee).